A 467-amino-acid polypeptide reads, in one-letter code: Asparagine--tRNA ligase (467 aa).

Belongs to the class-II aminoacyl-tRNA synthetase family. In terms of assembly, homodimer.

It is found in the cytoplasm. It carries out the reaction tRNA(Asn) + L-asparagine + ATP = L-asparaginyl-tRNA(Asn) + AMP + diphosphate + H(+). The chain is Asparagine--tRNA ligase from Legionella pneumophila (strain Lens).